Consider the following 359-residue polypeptide: Probable dual-specificity RNA methyltransferase RlmN (359 aa).

Catalysis depends on E91, which acts as the Proton acceptor. In terms of domain architecture, Radical SAM core spans 97-329 (QHYGHSVCVT…KKNGVNCVVR (233 aa)). Residues C104 and C340 are joined by a disulfide bond. [4Fe-4S] cluster-binding residues include C111, C115, and C118. S-adenosyl-L-methionine is bound by residues 163-164 (GE), S195, 218-220 (SLH), and N296. The active-site S-methylcysteine intermediate is the C340.

Belongs to the radical SAM superfamily. RlmN family. [4Fe-4S] cluster serves as cofactor.

Its subcellular location is the cytoplasm. It catalyses the reaction adenosine(2503) in 23S rRNA + 2 reduced [2Fe-2S]-[ferredoxin] + 2 S-adenosyl-L-methionine = 2-methyladenosine(2503) in 23S rRNA + 5'-deoxyadenosine + L-methionine + 2 oxidized [2Fe-2S]-[ferredoxin] + S-adenosyl-L-homocysteine. The catalysed reaction is adenosine(37) in tRNA + 2 reduced [2Fe-2S]-[ferredoxin] + 2 S-adenosyl-L-methionine = 2-methyladenosine(37) in tRNA + 5'-deoxyadenosine + L-methionine + 2 oxidized [2Fe-2S]-[ferredoxin] + S-adenosyl-L-homocysteine. Functionally, specifically methylates position 2 of adenine 2503 in 23S rRNA and position 2 of adenine 37 in tRNAs. The sequence is that of Probable dual-specificity RNA methyltransferase RlmN from Streptococcus pyogenes serotype M18 (strain MGAS8232).